Consider the following 84-residue polypeptide: UPF0386 protein Oant_1614 (84 aa).

This sequence belongs to the UPF0386 family.

The chain is UPF0386 protein Oant_1614 from Brucella anthropi (strain ATCC 49188 / DSM 6882 / CCUG 24695 / JCM 21032 / LMG 3331 / NBRC 15819 / NCTC 12168 / Alc 37) (Ochrobactrum anthropi).